We begin with the raw amino-acid sequence, 335 residues long: Urokinase plasminogen activator surface receptor (335 aa).

An N-terminal signal peptide occupies residues 1–22 (MGHPLLLPLLLLLHTCVPASWG). UPAR/Ly6 domains lie at 23 to 114 (LRCM…RSRY), 115 to 213 (LECI…PQNG), and 214 to 305 (HQCY…YRKG). Disulfide bonds link cysteine 25-cysteine 46, cysteine 28-cysteine 34, and cysteine 39-cysteine 67. Asparagine 74 carries N-linked (GlcNAc...) asparagine glycosylation. 11 disulfide bridges follow: cysteine 93/cysteine 98, cysteine 117/cysteine 144, cysteine 120/cysteine 127, cysteine 137/cysteine 169, cysteine 175/cysteine 192, cysteine 193/cysteine 198, cysteine 216/cysteine 244, cysteine 219/cysteine 227, cysteine 237/cysteine 263, cysteine 269/cysteine 287, and cysteine 288/cysteine 293. 5 N-linked (GlcNAc...) asparagine glycosylation sites follow: asparagine 184, asparagine 194, asparagine 222, asparagine 255, and asparagine 284. The GPI-anchor amidated glycine moiety is linked to residue glycine 305. Positions 306–335 (AAPQPGPAHLSLTITLLMTARLWGGTLLWT) are cleaved as a propeptide — removed in mature form.

Monomer. Interacts (via the UPAR/Ly6 domains) with SRPX2. Interacts with MRC2. Interacts with FAP (seprase); the interaction occurs at the cell surface of invadopodia membrane. Interacts with SORL1 (via N-terminal ectodomain); this interaction decreases PLAUR internalization. The ternary complex composed of PLAUR-PLAU-SERPINE1 also interacts with SORL1.

It localises to the cell membrane. It is found in the cell projection. Its subcellular location is the invadopodium membrane. Acts as a receptor for urokinase plasminogen activator. Plays a role in localizing and promoting plasmin formation. Mediates the proteolysis-independent signal transduction activation effects of U-PA. It is subject to negative-feedback regulation by U-PA which cleaves it into an inactive form. This is Urokinase plasminogen activator surface receptor (PLAUR) from Macaca fascicularis (Crab-eating macaque).